A 135-amino-acid polypeptide reads, in one-letter code: Ig heavy chain V region XIG14 (135 aa).

The first 18 residues, 1 to 18 (DFIIFFIFMFFSPSCILS), serve as a signal peptide directing secretion. An Ig-like domain is found at 20–128 (TLQESGPGTV…GYNFDYWGQG (109 aa)).

This chain is Ig heavy chain V region XIG14, found in Xenopus laevis (African clawed frog).